The following is a 528-amino-acid chain: DEAD-box ATP-dependent RNA helicase 6 (528 aa).

Composition is skewed to low complexity over residues 1–15 (MNNNNNNRGRFPPGI) and 65–80 (QQYVQRGYPQQIQQQQ). The tract at residues 1 to 80 (MNNNNNNRGR…GYPQQIQQQQ (80 aa)) is disordered. Residues 154-182 (NEFEDYFLKRDLLRGIYEKGFEKPSPIQE) carry the Q motif motif. The 171-residue stretch at 185 to 355 (IPIALTGSDI…DRYLKKPYII (171 aa)) folds into the Helicase ATP-binding domain. 198–205 (AKNGTGKT) contacts ATP. T260 is modified (phosphothreonine). The DEAD box motif lies at 303-306 (DEAD). Positions 365–525 (GVTQYYAFVE…PIPSLIDKAI (161 aa)) constitute a Helicase C-terminal domain.

This sequence belongs to the DEAD box helicase family. DDX6/DHH1 subfamily.

The protein localises to the cytoplasm. The protein resides in the P-body. It catalyses the reaction ATP + H2O = ADP + phosphate + H(+). ATP-dependent RNA helicase involved in mRNA turnover, and more specifically in mRNA decapping. This Arabidopsis thaliana (Mouse-ear cress) protein is DEAD-box ATP-dependent RNA helicase 6 (RH6).